A 433-amino-acid chain; its full sequence is 3-phosphoshikimate 1-carboxyvinyltransferase (433 aa).

Lysine 22, serine 23, and arginine 27 together coordinate 3-phosphoshikimate. Lysine 22 is a binding site for phosphoenolpyruvate. Positions 95 and 123 each coordinate phosphoenolpyruvate. 3-phosphoshikimate is bound by residues serine 167, glutamine 169, aspartate 315, and lysine 342. Residue glutamine 169 coordinates phosphoenolpyruvate. Aspartate 315 acts as the Proton acceptor in catalysis. The phosphoenolpyruvate site is built by arginine 346 and arginine 387.

It belongs to the EPSP synthase family. As to quaternary structure, monomer.

Its subcellular location is the cytoplasm. It catalyses the reaction 3-phosphoshikimate + phosphoenolpyruvate = 5-O-(1-carboxyvinyl)-3-phosphoshikimate + phosphate. It participates in metabolic intermediate biosynthesis; chorismate biosynthesis; chorismate from D-erythrose 4-phosphate and phosphoenolpyruvate: step 6/7. Its function is as follows. Catalyzes the transfer of the enolpyruvyl moiety of phosphoenolpyruvate (PEP) to the 5-hydroxyl of shikimate-3-phosphate (S3P) to produce enolpyruvyl shikimate-3-phosphate and inorganic phosphate. The chain is 3-phosphoshikimate 1-carboxyvinyltransferase from Legionella pneumophila (strain Lens).